Reading from the N-terminus, the 284-residue chain is HTH-type transcriptional activator RhaR (284 aa).

Residues 181–279 (DMLMNALRAS…GVSPSAYRQR (99 aa)) form the HTH araC/xylS-type domain. 2 DNA-binding regions (H-T-H motif) span residues 198–219 (EAFCEQHHFSARSLRSRFKEQT) and 246–269 (IGDVAALCGFEDSNYFSVVFHQAF).

As to quaternary structure, binds DNA as a dimer.

The protein localises to the cytoplasm. Its function is as follows. Activates expression of the rhaSR operon in response to L-rhamnose. The chain is HTH-type transcriptional activator RhaR from Pectobacterium atrosepticum (strain SCRI 1043 / ATCC BAA-672) (Erwinia carotovora subsp. atroseptica).